Consider the following 85-residue polypeptide: Large ribosomal subunit protein bL27 (85 aa).

It belongs to the bacterial ribosomal protein bL27 family.

This chain is Large ribosomal subunit protein bL27, found in Campylobacter concisus (strain 13826).